The sequence spans 489 residues: Beta-dihydromenaquinone-9 omega-hydroxylase (489 aa).

Residue C435 coordinates heme.

The protein belongs to the cytochrome P450 family. It depends on heme as a cofactor.

The protein localises to the cytoplasm. The enzyme catalyses beta-dihydromenaquinone-9 + 2 reduced [2Fe-2S]-[ferredoxin] + O2 + 2 H(+) = omega-hydroxy-beta-dihydromenaquinone-9 + 2 oxidized [2Fe-2S]-[ferredoxin] + H2O. Its function is as follows. Involved in the biosynthesis of sulfomenaquinone (SMK, initially named S881 on the basis of its mass), which is localized in the outer envelope of M.bovis and negatively regulates its virulence. Catalyzes the hydroxylation of beta-dihydromenaquinone-9, leading to the formation of omega-hydroxy-beta-dihydromenaquinone-9. In Mycobacterium bovis (strain ATCC BAA-935 / AF2122/97), this protein is Beta-dihydromenaquinone-9 omega-hydroxylase (cyp128).